A 224-amino-acid chain; its full sequence is MARYLVLAVALLLAACSSTQKKPLADDPFYAPVYPEAPPTKIAATGSIYQDSQASSLYSDIRAHKVGDIITIVLKESTQAKKSAGNQIKKGSDMSLDPIFAGGSNISVGGVPIDLRYKDSMNTKRESDADQSNSLDGSISANVMQVLNNGSLVIRGEKWISINNGDEFIRVTGLVRSQDIKPDNTIDSTRMANARIQYSGTGTFADAQKVGWLSQFFMSDWWPF.

Residues 1–15 (MARYLVLAVALLLAA) form the signal peptide. A lipid anchor (N-palmitoyl cysteine) is attached at cysteine 16. Cysteine 16 carries S-diacylglycerol cysteine lipidation.

It belongs to the FlgH family. The basal body constitutes a major portion of the flagellar organelle and consists of four rings (L,P,S, and M) mounted on a central rod.

Its subcellular location is the cell outer membrane. The protein localises to the bacterial flagellum basal body. In terms of biological role, assembles around the rod to form the L-ring and probably protects the motor/basal body from shearing forces during rotation. In Shewanella baltica (strain OS185), this protein is Flagellar L-ring protein.